Here is a 248-residue protein sequence, read N- to C-terminus: Type III pantothenate kinase (248 aa).

6-13 serves as a coordination point for ATP; sequence ELGNSQLK. Substrate is bound by residues Tyr-94 and 101-104; that span reads GVDR. The Proton acceptor role is filled by Asp-103. Asp-123 contributes to the K(+) binding site. An ATP-binding site is contributed by Thr-126. Thr-179 contributes to the substrate binding site.

It belongs to the type III pantothenate kinase family. As to quaternary structure, homodimer. It depends on NH4(+) as a cofactor. K(+) is required as a cofactor.

The protein resides in the cytoplasm. It carries out the reaction (R)-pantothenate + ATP = (R)-4'-phosphopantothenate + ADP + H(+). It functions in the pathway cofactor biosynthesis; coenzyme A biosynthesis; CoA from (R)-pantothenate: step 1/5. In terms of biological role, catalyzes the phosphorylation of pantothenate (Pan), the first step in CoA biosynthesis. This chain is Type III pantothenate kinase, found in Hydrogenovibrio crunogenus (strain DSM 25203 / XCL-2) (Thiomicrospira crunogena).